A 342-amino-acid chain; its full sequence is Maltose regulon regulatory protein MalI (342 aa).

Residues 7–61 (ITIHDVALAAGVSVSTVSLVLSGKGRISTATGERVNAAIEELGFVRNRQASALRG) enclose the HTH lacI-type domain. Positions 9 to 28 (IHDVALAAGVSVSTVSLVLS) form a DNA-binding region, H-T-H motif.

Functionally, repressor for the malX and malY genes. Also regulates its own expression. Binds maltose as an inducer. The polypeptide is Maltose regulon regulatory protein MalI (malI) (Escherichia coli (strain K12)).